We begin with the raw amino-acid sequence, 531 residues long: NADH-quinone oxidoreductase subunit N (531 aa).

13 consecutive transmembrane segments (helical) span residues 13 to 33 (LAPI…EAFA), 45 to 65 (LALL…AEVI), 85 to 105 (PALA…LVIA), 150 to 170 (LFSV…TLFI), 200 to 220 (YFLL…LLYG), 242 to 262 (GLLV…VGAV), 289 to 309 (VAAF…MTWD), 310 to 330 (IQPF…VLAI), 339 to 359 (LAYS…AMSP), 365 to 385 (VFFY…LVAL), 415 to 435 (VATV…TSGF), 460 to 480 (ASAA…FTSP), and 496 to 516 (GFTA…GVWP).

Belongs to the complex I subunit 2 family. NDH-1 is composed of 14 different subunits. Subunits NuoA, H, J, K, L, M, N constitute the membrane sector of the complex.

The protein localises to the cell membrane. The enzyme catalyses a quinone + NADH + 5 H(+)(in) = a quinol + NAD(+) + 4 H(+)(out). Its function is as follows. NDH-1 shuttles electrons from NADH, via FMN and iron-sulfur (Fe-S) centers, to quinones in the respiratory chain. The immediate electron acceptor for the enzyme in this species is believed to be a menaquinone. Couples the redox reaction to proton translocation (for every two electrons transferred, four hydrogen ions are translocated across the cytoplasmic membrane), and thus conserves the redox energy in a proton gradient. This Beutenbergia cavernae (strain ATCC BAA-8 / DSM 12333 / CCUG 43141 / JCM 11478 / NBRC 16432 / NCIMB 13614 / HKI 0122) protein is NADH-quinone oxidoreductase subunit N.